The sequence spans 1249 residues: ATP-dependent helicase/nuclease subunit A (1249 aa).

One can recognise a UvrD-like helicase ATP-binding domain in the interval 5–482; it reads TNYTPSQQAV…IVLAENFRSV (478 aa). 26–33 is a binding site for ATP; the sequence is ASAGSGKT. The region spanning 521 to 811 is the UvrD-like helicase C-terminal domain; it reads ADMPQTTNLL…NVMTIHGSKG (291 aa).

Belongs to the helicase family. AddA subfamily. As to quaternary structure, heterodimer of AddA and AddB/RexB. The cofactor is Mg(2+).

The catalysed reaction is Couples ATP hydrolysis with the unwinding of duplex DNA by translocating in the 3'-5' direction.. It carries out the reaction ATP + H2O = ADP + phosphate + H(+). In terms of biological role, the heterodimer acts as both an ATP-dependent DNA helicase and an ATP-dependent, dual-direction single-stranded exonuclease. Recognizes the chi site generating a DNA molecule suitable for the initiation of homologous recombination. The AddA nuclease domain is required for chi fragment generation; this subunit has the helicase and 3' -&gt; 5' nuclease activities. This Lactiplantibacillus plantarum (strain ATCC BAA-793 / NCIMB 8826 / WCFS1) (Lactobacillus plantarum) protein is ATP-dependent helicase/nuclease subunit A.